The chain runs to 278 residues: uncharacterized protein (278 aa).

Basic and acidic residues predominate over residues 1–16 (MFGLKVKDAQKDDQKS). Disordered stretches follow at residues 1 to 86 (MFGL…RGSN) and 98 to 126 (FGTT…TPWL). Low complexity-rich tracts occupy residues 33–45 (QGTS…RGSS) and 99–117 (GTTS…STPS).

The protein belongs to the adhesin P1 family.

This is an uncharacterized protein from Mycoplasma pneumoniae (strain ATCC 29342 / M129 / Subtype 1) (Mycoplasmoides pneumoniae).